A 314-amino-acid chain; its full sequence is DegV domain-containing protein XCC3382 (314 aa).

Positions 3–307 (IGIVVDSACD…KGALAVAFAA (305 aa)) constitute a DegV domain. Hexadecanoate-binding residues include Thr-63 and Ser-96.

May bind long-chain fatty acids, such as palmitate, and may play a role in lipid transport or fatty acid metabolism. The chain is DegV domain-containing protein XCC3382 from Xanthomonas campestris pv. campestris (strain ATCC 33913 / DSM 3586 / NCPPB 528 / LMG 568 / P 25).